Reading from the N-terminus, the 418-residue chain is Histidine--tRNA ligase (418 aa).

The protein belongs to the class-II aminoacyl-tRNA synthetase family.

It localises to the cytoplasm. It catalyses the reaction tRNA(His) + L-histidine + ATP = L-histidyl-tRNA(His) + AMP + diphosphate + H(+). This Methanococcus maripaludis (strain C6 / ATCC BAA-1332) protein is Histidine--tRNA ligase.